The following is a 178-amino-acid chain: RNA-binding protein (178 aa).

The disordered stretch occupies residues 108 to 178; that stretch reads SGFQKPKIGS…KGKGRRGGKR (71 aa). A compositionally biased stretch (basic residues) spans 168–178; the sequence is SKGKGRRGGKR.

It belongs to the phytoreovirus RNA-binding protein family.

Its subcellular location is the host cytoplasm. Its function is as follows. Constituent of viral factories. Binds to ssRNA and dsRNA. The polypeptide is RNA-binding protein (Wound tumor virus (strain NJ) (WTV)).